A 561-amino-acid chain; its full sequence is Putative transport protein YbjL (561 aa).

A run of 5 helical transmembrane segments spans residues 8 to 28, 32 to 52, 66 to 86, 94 to 114, and 158 to 178; these read LLNG…LCLG, LGSV…LLGQ, FMLF…SIFF, MLAL…GKLF, and NLSL…IVGA. 2 consecutive RCK C-terminal domains span residues 200–288 and 292–373; these read RGLD…SFRN and VFDR…RIGF. A run of 5 helical transmembrane segments spans residues 383 to 403, 406 to 426, 447 to 467, 475 to 495, and 540 to 560; these read LLAF…TFQF, FSFG…LGFL, FGLM…ISNG, MLIA…LFGA, and AIAN…WPGL.

Belongs to the AAE transporter (TC 2.A.81) family. YbjL subfamily.

The protein resides in the cell membrane. The chain is Putative transport protein YbjL from Salmonella agona (strain SL483).